The primary structure comprises 876 residues: Translation initiation factor IF-2 (876 aa).

The tr-type G domain maps to 378–547 (TRPPIITIMG…LTQSEMLELK (170 aa)). Residues 387–394 (GHVDHGKT) are G1. Residue 387–394 (GHVDHGKT) coordinates GTP. The interval 412–416 (RITQH) is G2. Residues 433-436 (DTPG) form a G3 region. GTP-binding positions include 433 to 437 (DTPGH) and 487 to 490 (NKID). The interval 487–490 (NKID) is G4. The segment at 523–525 (SAK) is G5.

The protein belongs to the TRAFAC class translation factor GTPase superfamily. Classic translation factor GTPase family. IF-2 subfamily.

It localises to the cytoplasm. Functionally, one of the essential components for the initiation of protein synthesis. Protects formylmethionyl-tRNA from spontaneous hydrolysis and promotes its binding to the 30S ribosomal subunits. Also involved in the hydrolysis of GTP during the formation of the 70S ribosomal complex. This Buchnera aphidicola subsp. Baizongia pistaciae (strain Bp) protein is Translation initiation factor IF-2.